Here is a 448-residue protein sequence, read N- to C-terminus: Asparagine--tRNA ligase (448 aa).

Belongs to the class-II aminoacyl-tRNA synthetase family. In terms of assembly, homodimer.

It localises to the cytoplasm. It carries out the reaction tRNA(Asn) + L-asparagine + ATP = L-asparaginyl-tRNA(Asn) + AMP + diphosphate + H(+). This chain is Asparagine--tRNA ligase, found in Streptococcus thermophilus (strain ATCC BAA-491 / LMD-9).